The sequence spans 239 residues: Gag polyprotein (239 aa).

Residues 124–141 (KGEEVGETTAQRDAKMAP) are compositionally biased toward basic and acidic residues. Residues 124–144 (KGEEVGETTAQRDAKMAPEKM) are disordered. Positions 172–175 (PPPY) match the PPXY motif motif. The segment at 184–214 (LAGVGEQQGQGGDTPWGAEQPRAEPGHAGLA) is disordered.

The protein resides in the virion. This chain is Gag polyprotein (ev-1), found in Galliformes.